The sequence spans 887 residues: Oxysterol-binding protein-related protein 3 (887 aa).

The segment at 1-35 (MMSDEKNLGVSQKLVSPSRSTSSCSSKQGSRQDSW) is disordered. Phosphoserine occurs at positions 16 and 34. A compositionally biased stretch (low complexity) spans 16–32 (SPSRSTSSCSSKQGSRQ). Residues 51-146 (PPVQKGFLLK…WVSKLRHHRM (96 aa)) enclose the PH domain. The short motif at 161-167 (HFFSGST) is the FFAT 1 element. Serine 200, serine 251, and serine 265 each carry phosphoserine. The interval 261–326 (GSFESPKKEK…KNYSDGSETS (66 aa)) is disordered. The span at 268–280 (KEKRSHRRWRSRA) shows a compositional bias: basic residues. Residues serine 304, serine 309, serine 320, serine 323, serine 371, serine 372, serine 410, serine 425, serine 437, and serine 440 each carry the phosphoserine modification. Positions 450 to 454 (EFFDA) match the FFAT 2 motif.

The protein belongs to the OSBP family. In terms of assembly, homodimer. Interacts with RRAS. Interacts (phosphorylated form) with VAPA. Interacts with OSBPL6. In terms of processing, phosphorylation is enhanced in vitro by phorbol-12-myristate-13-acetate (PMA), forskolin and calcium ionophore A23187. Phosphorylation seems to be stimulated in conditions of low cell-cell (or cell-matrix) adhesion. As to expression, expressed in a subset of small lymphocytes (at protein level). Expressed at high concentration in kidney, lymph node and thymus. Expressed at moderate concentration in stomach, jejunum, ileum, appendix, spleen, leukocytes, trachea, lung and thyroid gland. Expressed at low concentration in whole brain, esophagus, duodenum, ileocecum, colon, skeletal muscle, bone marrow, placenta and mammary gland. Isoform 1a, isoform 1b, isoform 1c and isoform 1d are highly expressed in brain, bone marrow, colon, kidney, lung, skeletal muscle, spleen, thymus and thyroid. Not expressed in heart and liver. Isoform 2a, isoform 2b, isoform 2c and isoform 2d are expressed in brain, bone marrow, kidney, skeletal muscle, spleen, thymus and thyroid. Not expressed in heart, liver and lung.

It localises to the endoplasmic reticulum membrane. The protein resides in the cytoplasm. Its subcellular location is the cytosol. The protein localises to the cell membrane. It is found in the cell projection. It localises to the filopodium tip. The protein resides in the nucleus membrane. In terms of biological role, phosphoinositide-binding protein which associates with both cell and endoplasmic reticulum (ER) membranes. Can bind to the ER membrane protein VAPA and recruit VAPA to plasma membrane sites, thus linking these intracellular compartments. The ORP3-VAPA complex stimulates RRAS signaling which in turn attenuates integrin beta-1 (ITGB1) activation at the cell surface. With VAPA, may regulate ER morphology. Has a role in regulation of the actin cytoskeleton, cell polarity and cell adhesion. Binds to phosphoinositides with preference for PI(3,4)P2 and PI(3,4,5)P3. Also binds 25-hydroxycholesterol and cholesterol. The polypeptide is Oxysterol-binding protein-related protein 3 (OSBPL3) (Homo sapiens (Human)).